The following is a 1400-amino-acid chain: DNA-directed RNA polymerase subunit beta' (1400 aa).

Zn(2+)-binding residues include Cys-71, Cys-73, Cys-86, and Cys-89. Residues Asp-462, Asp-464, and Asp-466 each contribute to the Mg(2+) site. Cys-810, Cys-884, Cys-891, and Cys-894 together coordinate Zn(2+).

This sequence belongs to the RNA polymerase beta' chain family. As to quaternary structure, the RNAP catalytic core consists of 2 alpha, 1 beta, 1 beta' and 1 omega subunit. When a sigma factor is associated with the core the holoenzyme is formed, which can initiate transcription. Mg(2+) serves as cofactor. It depends on Zn(2+) as a cofactor.

It catalyses the reaction RNA(n) + a ribonucleoside 5'-triphosphate = RNA(n+1) + diphosphate. Its function is as follows. DNA-dependent RNA polymerase catalyzes the transcription of DNA into RNA using the four ribonucleoside triphosphates as substrates. The polypeptide is DNA-directed RNA polymerase subunit beta' (Rhodopseudomonas palustris (strain BisA53)).